Reading from the N-terminus, the 418-residue chain is Glutamyl-tRNA reductase (418 aa).

Residues 57–60 (TCNR), Ser-113, 118–120 (DFE), and Gln-124 each bind substrate. Residue Cys-58 is the Nucleophile of the active site. 193–198 (GTGKIG) is a binding site for NADP(+).

This sequence belongs to the glutamyl-tRNA reductase family. As to quaternary structure, homodimer.

The catalysed reaction is (S)-4-amino-5-oxopentanoate + tRNA(Glu) + NADP(+) = L-glutamyl-tRNA(Glu) + NADPH + H(+). It functions in the pathway porphyrin-containing compound metabolism; protoporphyrin-IX biosynthesis; 5-aminolevulinate from L-glutamyl-tRNA(Glu): step 1/2. Functionally, catalyzes the NADPH-dependent reduction of glutamyl-tRNA(Glu) to glutamate 1-semialdehyde (GSA). This is Glutamyl-tRNA reductase from Christiangramia forsetii (strain DSM 17595 / CGMCC 1.15422 / KT0803) (Gramella forsetii).